The following is a 271-amino-acid chain: Aminoglycoside 3'-phosphotransferase (271 aa).

Asp198 functions as the Proton acceptor in the catalytic mechanism.

This sequence belongs to the aminoglycoside phosphotransferase family.

The catalysed reaction is kanamycin A + ATP = kanamycin 3'-phosphate + ADP + H(+). Its function is as follows. Resistance to kanamycin and structurally-related aminoglycosides, including amikacin. The protein is Aminoglycoside 3'-phosphotransferase (aphA) of Escherichia coli.